Reading from the N-terminus, the 313-residue chain is tRNA dimethylallyltransferase (313 aa).

Gly-11–Ser-18 lines the ATP pocket. Thr-13 to Ser-18 contacts substrate. 3 interaction with substrate tRNA regions span residues Asp-36–Thr-39, Gln-160–Arg-164, and Arg-244–Arg-249.

Belongs to the IPP transferase family. Monomer. Mg(2+) serves as cofactor.

The catalysed reaction is adenosine(37) in tRNA + dimethylallyl diphosphate = N(6)-dimethylallyladenosine(37) in tRNA + diphosphate. Functionally, catalyzes the transfer of a dimethylallyl group onto the adenine at position 37 in tRNAs that read codons beginning with uridine, leading to the formation of N6-(dimethylallyl)adenosine (i(6)A). This Bordetella pertussis (strain Tohama I / ATCC BAA-589 / NCTC 13251) protein is tRNA dimethylallyltransferase.